A 201-amino-acid chain; its full sequence is Glutathione peroxidase 1 (201 aa).

S32 is subject to Phosphoserine. Residue U47 is part of the active site. Residue U47 is a non-standard amino acid, selenocysteine. N6-acetyllysine; alternate occurs at positions 86, 112, and 146. An N6-succinyllysine; alternate mark is found at K86, K112, and K146. 2 positions are modified to phosphoserine: S195 and S199.

It belongs to the glutathione peroxidase family. Homotetramer. Interacts with MIEN1. During periods of oxidative stress, Sec-47 may react with a superoxide radical, irreversibly lose hydroselenide and be converted to dehydroalanine.

It is found in the cytoplasm. The enzyme catalyses 2 glutathione + H2O2 = glutathione disulfide + 2 H2O. The catalysed reaction is (12S)-hydroperoxy-(5Z,8Z,10E,14Z)-eicosatetraenoate + 2 glutathione = (12S)-hydroxy-(5Z,8Z,10E,14Z)-eicosatetraenoate + glutathione disulfide + H2O. Protects the hemoglobin in erythrocytes from oxidative breakdown. In platelets, plays a crucial role of glutathione peroxidase in the arachidonic acid metabolism. The protein is Glutathione peroxidase 1 (GPX1) of Hylobates lar (Lar gibbon).